A 231-amino-acid chain; its full sequence is 2-C-methyl-D-erythritol 4-phosphate cytidylyltransferase (231 aa).

It belongs to the IspD/TarI cytidylyltransferase family. IspD subfamily.

It carries out the reaction 2-C-methyl-D-erythritol 4-phosphate + CTP + H(+) = 4-CDP-2-C-methyl-D-erythritol + diphosphate. The protein operates within isoprenoid biosynthesis; isopentenyl diphosphate biosynthesis via DXP pathway; isopentenyl diphosphate from 1-deoxy-D-xylulose 5-phosphate: step 2/6. Its function is as follows. Catalyzes the formation of 4-diphosphocytidyl-2-C-methyl-D-erythritol from CTP and 2-C-methyl-D-erythritol 4-phosphate (MEP). The polypeptide is 2-C-methyl-D-erythritol 4-phosphate cytidylyltransferase (Bacillus licheniformis (strain ATCC 14580 / DSM 13 / JCM 2505 / CCUG 7422 / NBRC 12200 / NCIMB 9375 / NCTC 10341 / NRRL NRS-1264 / Gibson 46)).